Here is a 123-residue protein sequence, read N- to C-terminus: Ribonuclease P protein component 2 (123 aa).

Belongs to the eukaryotic/archaeal RNase P protein component 2 family. In terms of assembly, consists of a catalytic RNA component and at least 4-5 protein subunits.

It localises to the cytoplasm. It carries out the reaction Endonucleolytic cleavage of RNA, removing 5'-extranucleotides from tRNA precursor.. Its function is as follows. Part of ribonuclease P, a protein complex that generates mature tRNA molecules by cleaving their 5'-ends. This Sulfurisphaera tokodaii (strain DSM 16993 / JCM 10545 / NBRC 100140 / 7) (Sulfolobus tokodaii) protein is Ribonuclease P protein component 2.